The following is a 44-amino-acid chain: Large ribosomal subunit protein bL34 (44 aa).

It belongs to the bacterial ribosomal protein bL34 family.

This Wolbachia sp. subsp. Brugia malayi (strain TRS) protein is Large ribosomal subunit protein bL34.